The sequence spans 191 residues: Elongation factor P (191 aa).

Belongs to the elongation factor P family.

The protein localises to the cytoplasm. Its pathway is protein biosynthesis; polypeptide chain elongation. Functionally, involved in peptide bond synthesis. Stimulates efficient translation and peptide-bond synthesis on native or reconstituted 70S ribosomes in vitro. Probably functions indirectly by altering the affinity of the ribosome for aminoacyl-tRNA, thus increasing their reactivity as acceptors for peptidyl transferase. This is Elongation factor P from Bartonella tribocorum (strain CIP 105476 / IBS 506).